The sequence spans 228 residues: UPF0758 protein MW1604 (228 aa).

One can recognise an MPN domain in the interval 102 to 224 (KITQPSDVAD…FTSLVEAGYF (123 aa)). Zn(2+)-binding residues include His173, His175, and Asp186. The short motif at 173-186 (HNHPSGDVTPSQED) is the JAMM motif element.

Belongs to the UPF0758 family.

The chain is UPF0758 protein MW1604 from Staphylococcus aureus (strain MW2).